The sequence spans 314 residues: Homoserine kinase (314 aa).

An ATP-binding site is contributed by 95-105 (PHSRGLGSSAA).

It belongs to the GHMP kinase family. Homoserine kinase subfamily.

The protein resides in the cytoplasm. It carries out the reaction L-homoserine + ATP = O-phospho-L-homoserine + ADP + H(+). It functions in the pathway amino-acid biosynthesis; L-threonine biosynthesis; L-threonine from L-aspartate: step 4/5. Catalyzes the ATP-dependent phosphorylation of L-homoserine to L-homoserine phosphate. The chain is Homoserine kinase from Mycobacterium sp. (strain JLS).